The following is a 670-amino-acid chain: Probable Rho-GTPase-activating protein 9 (670 aa).

One can recognise an F-BAR domain in the interval 3-392 (DGFSNSFWSR…SFKNLDSLRD (390 aa)). A disordered region spans residues 141–161 (NSKKSNLTDRKPIPTSRKSNK). In terms of domain architecture, Rho-GAP spans 425 to 622 (SSLTEDNLIV…DLINEFENLF (198 aa)). Phosphothreonine is present on Thr-640. The segment covering 641–663 (PITTSPQKLKLPRSSSPCKNPSP) has biased composition (polar residues). Residues 641-670 (PITTSPQKLKLPRSSSPCKNPSPTRRFRPF) are disordered. The residue at position 645 (Ser-645) is a Phosphoserine.

The protein resides in the cytoplasm. The polypeptide is Probable Rho-GTPase-activating protein 9 (rga9) (Schizosaccharomyces pombe (strain 972 / ATCC 24843) (Fission yeast)).